Here is a 1251-residue protein sequence, read N- to C-terminus: Botulinum neurotoxin type E (1251 aa).

H212 provides a ligand contact to Zn(2+). E213 is a catalytic residue. 2 residues coordinate Zn(2+): H216 and E251. C412 and C426 are joined by a disulfide. Positions 423-819 are translocation domain (TD); that stretch reads KSICIEINNG…ELNSMVIDTL (397 aa). The tract at residues 466-515 is belt; sequence NDLDQVILNFNSESAPGLSDEKLNLTIQNDAYIPKYDSNGTSDIEQHDVN. The segment at 845 to 1067 is N-terminus of receptor binding domain (N-RBD); that stretch reads KRIKSSSVLN…EIQTLYNNEP (223 aa). Residues 1068–1251 are C-terminus of receptor binding domain (C-RBD); the sequence is NANILKDFWG…ISEEHGWQEK (184 aa). A Host ganglioside-binding motif motif is present at residues 1221-1224; that stretch reads STWY.

This sequence belongs to the peptidase M27 family. As to quaternary structure, heterodimer; disulfide-linked heterodimer of a light chain (LC) and a heavy chain (HC). The LC has the proteolytic/pharmacological activity, while the N- and C-terminal of the HC mediate channel formation and toxin binding, respectively. Interacts with host synaptic vesicle glycoproteins SV2A and SV2B which probably serve as coreceptors. The cofactor is Zn(2+).

The protein resides in the secreted. The protein localises to the host cytoplasm. Its subcellular location is the host cytosol. It localises to the host synapse. It is found in the host presynaptic cell membrane. The protein resides in the host cytoplasmic vesicle. The protein localises to the host secretory vesicle. Its subcellular location is the host synaptic vesicle membrane. The catalysed reaction is Limited hydrolysis of proteins of the neuroexocytosis apparatus, synaptobrevins, SNAP25 or syntaxin. No detected action on small molecule substrates.. Functionally, botulinum toxin causes flaccid paralysis by inhibiting neurotransmitter (acetylcholine) release from the presynaptic membranes of nerve terminals of eukaryotic host skeletal and autonomic nervous system, with frequent heart or respiratory failure. Precursor of botulinum neurotoxin E which has 2 coreceptors; complex polysialylated gangliosides found on neural tissue and specific membrane-anchored proteins found in synaptic vesicles. Receptor proteins are exposed on host presynaptic cell membrane during neurotransmitter release, when the toxin heavy chain (HC) binds to them. Upon synaptic vesicle recycling the toxin is taken up via the endocytic pathway. When the pH of the toxin-containing endosome drops a structural rearrangement occurs so that the N-terminus of the HC forms pores that allows the light chain (LC) to translocate into the cytosol. Once in the cytosol the disulfide bond linking the 2 subunits is reduced and LC cleaves its target protein on synaptic vesicles, preventing their fusion with the cytoplasmic membrane and thus neurotransmitter release. In terms of biological role, has proteolytic activity. After translocation into the eukaryotic host cytosol, LC hydrolyzes the '180-Arg-|-Ile-181' bond in SNAP25, blocking neurotransmitter release. Responsible for host epithelial cell transcytosis, host nerve cell targeting and translocation of light chain (LC) into host cytosol. Composed of 3 subdomains; the translocation domain (TD), and N-terminus and C-terminus of the receptor-binding domain (RBD). The RBD is responsible for the adherence of the toxin to the cell surface. It simultaneously recognizes 2 coreceptors; host polysialated gangliosides and the receptor proteins SV2A and SV2B in close proximity on host synaptic vesicles. Interaction with SV2 proteins requires SV2 glycosylation. The N-terminus of the TD wraps an extended belt around the perimeter of the LC, protecting Zn(2+) in the active site; it may also prevent premature LC dissociation from the translocation channel and protect toxin prior to translocation. The TD inserts into synaptic vesicle membrane to allow translocation into the host cytosol. Binds ganglioside GD1a in vitro. The polypeptide is Botulinum neurotoxin type E (Clostridium butyricum).